The following is a 219-amino-acid chain: Cytidylate kinase (219 aa).

Residue 10–18 participates in ATP binding; that stretch reads GPAAAGKST.

It belongs to the cytidylate kinase family. Type 1 subfamily.

It is found in the cytoplasm. The enzyme catalyses CMP + ATP = CDP + ADP. It carries out the reaction dCMP + ATP = dCDP + ADP. The sequence is that of Cytidylate kinase from Staphylococcus aureus (strain bovine RF122 / ET3-1).